The primary structure comprises 70 residues: Small ribosomal subunit protein bS21 (70 aa).

This sequence belongs to the bacterial ribosomal protein bS21 family.

The sequence is that of Small ribosomal subunit protein bS21 from Nitrosomonas eutropha (strain DSM 101675 / C91 / Nm57).